Consider the following 785-residue polypeptide: Phenylalanine--tRNA ligase beta subunit (785 aa).

The tRNA-binding domain occupies 39–147 (FPIPRGVVFA…DALPPGTPLS (109 aa)). Residues 399-474 (KPPEAIPFRP…RIQGYETIPL (76 aa)) form the B5 domain. Mg(2+) is bound by residues D452, D458, E461, and E462. The region spanning 688–780 (SRHPAAFRDL…ALRARGFGLR (93 aa)) is the FDX-ACB domain.

It belongs to the phenylalanyl-tRNA synthetase beta subunit family. Type 1 subfamily. In terms of assembly, tetramer of two alpha and two beta subunits. Mg(2+) serves as cofactor.

Its subcellular location is the cytoplasm. It carries out the reaction tRNA(Phe) + L-phenylalanine + ATP = L-phenylalanyl-tRNA(Phe) + AMP + diphosphate + H(+). The protein is Phenylalanine--tRNA ligase beta subunit (pheT) of Thermus thermophilus (strain ATCC 27634 / DSM 579 / HB8).